A 414-amino-acid chain; its full sequence is Gamma-glutamyl phosphate reductase (414 aa).

This sequence belongs to the gamma-glutamyl phosphate reductase family.

The protein localises to the cytoplasm. It catalyses the reaction L-glutamate 5-semialdehyde + phosphate + NADP(+) = L-glutamyl 5-phosphate + NADPH + H(+). It functions in the pathway amino-acid biosynthesis; L-proline biosynthesis; L-glutamate 5-semialdehyde from L-glutamate: step 2/2. Catalyzes the NADPH-dependent reduction of L-glutamate 5-phosphate into L-glutamate 5-semialdehyde and phosphate. The product spontaneously undergoes cyclization to form 1-pyrroline-5-carboxylate. This Limosilactobacillus reuteri (strain DSM 20016) (Lactobacillus reuteri) protein is Gamma-glutamyl phosphate reductase.